The sequence spans 245 residues: MSQLFYNNETISRIIKSQFDMALSHYGDIKYAYMVLNKKKPTEILIISNHHDEWREIYQANNYQHIDPVVIAALNKITPFPWDEDLLVSTQLKMSKIFNLSREHNITNGYTFVLHDHSNNLVMLSIMIDESNVSNIDDVIESNKDKLQMTLMTIHAETISLYREMIRNKEDERSNDKDIFSQRENEILYWASMGKTYQEIALILDIKTGTVKFHIGNVVKKLGVLNAKHAIRLGIELQLIRPVQS.

An HTH luxR-type domain is found at 173 to 238; sequence RSNDKDIFSQ…HAIRLGIELQ (66 aa). The H-T-H motif DNA-binding region spans 197–216; the sequence is YQEIALILDIKTGTVKFHIG.

This sequence belongs to the autoinducer-regulated transcriptional regulatory protein family.

In terms of biological role, functions as an OHLL responsive transcriptional regulator that acts in virulence (soft rot disease) through the activation of genes for plant tissue macerating enzymes. This chain is Transcriptional activator protein ExpR (expR), found in Pectobacterium parmentieri.